The sequence spans 581 residues: Arginine--tRNA ligase (581 aa).

The short motif at 126 to 136 (PNLAKEMHVGH) is the 'HIGH' region element.

This sequence belongs to the class-I aminoacyl-tRNA synthetase family. In terms of assembly, monomer.

The protein resides in the cytoplasm. The catalysed reaction is tRNA(Arg) + L-arginine + ATP = L-arginyl-tRNA(Arg) + AMP + diphosphate. The chain is Arginine--tRNA ligase from Shewanella halifaxensis (strain HAW-EB4).